The primary structure comprises 460 residues: Piperamide synthase (460 aa).

The tract at residues 1–23 (MASSQLEFNVERKQPELLGPAEP) is disordered. Residues histidine 168 and aspartate 383 each act as proton acceptor in the active site. Positions 458–460 (SRM) match the Microbody targeting signal motif.

Belongs to the plant acyltransferase family. Monomer. As to expression, confined to immature fruits perisperm. Also detectable in roots.

The protein localises to the cytoplasm. The enzyme catalyses piperidine + (E,E)-piperoyl-CoA = piperine + CoA + H(+). It functions in the pathway aromatic compound metabolism. Its function is as follows. Involved in the biosynthesis of aromatic piperamides natural products such as piperine (1-piperoyl-piperidine), the pungent principle contributing, together with several terpenoids, to the aromatic properties of black pepper fruits, and displaying numerous pharmacological activities such as antiproliferative, antitumor, antiangiogenesis, antioxidant, antidiabetic, antiobesity, cardioprotective, antimicrobial, antiaging, and immunomodulatory effects. Can use piperidine and benzylamine as acceptors and various CoA-esters with aliphatic and aromatic amines as CoA-donors, including piperoyl-CoA, hexanoyl-CoA and octanoyl-CoA, and, to a lower extent, benzoyl-CoA. Mediates the conversion of piperidine to three piperine isomers in the presence of piperoyl-CoA. Its ability to convert in vitro piperidine to hexanoylpiperidine in the presence of hexanoyl-CoA, and to octanoylpiperidine in the presence of octanoyl-CoA is not confirmed in vivo according to fruits metabolome analysis. The protein is Piperamide synthase of Piper nigrum (Black pepper).